Consider the following 370-residue polypeptide: Putative F-box protein At1g47390 (370 aa).

Positions 1–47 (MAPEEKLPCELIEEILSRVPPESLVRFRTVSKKWNALFDDKMFINNH) constitute an F-box domain.

This chain is Putative F-box protein At1g47390, found in Arabidopsis thaliana (Mouse-ear cress).